Consider the following 204-residue polypeptide: Molybdenum cofactor guanylyltransferase (204 aa).

Residues 12 to 14, lysine 25, asparagine 53, aspartate 71, and aspartate 101 contribute to the GTP site; that span reads LAG. Aspartate 101 provides a ligand contact to Mg(2+).

Belongs to the MobA family. As to quaternary structure, monomer. Requires Mg(2+) as cofactor.

The protein localises to the cytoplasm. It catalyses the reaction Mo-molybdopterin + GTP + H(+) = Mo-molybdopterin guanine dinucleotide + diphosphate. In terms of biological role, transfers a GMP moiety from GTP to Mo-molybdopterin (Mo-MPT) cofactor (Moco or molybdenum cofactor) to form Mo-molybdopterin guanine dinucleotide (Mo-MGD) cofactor. The protein is Molybdenum cofactor guanylyltransferase of Ralstonia nicotianae (strain ATCC BAA-1114 / GMI1000) (Ralstonia solanacearum).